The chain runs to 420 residues: MDKFRVQGPTRLAGEVTISGAKNAALPILFAALLAEEPVEIQNVPKLRDIDTTMKLLGQLGARVERNGSVHVDASNVNVFCAPYDLVKTMRASIWALGPLVARFGQGQVSLPGGCAIGARPVDLHIYGLEQLGAQIVLEEGYVKATVDGRLKGAHIVMDKVSVGATVTIMSAATLAEGTTIIENAAREPEIVDTANFLNTLGAKISGAGSDKITIEGVARLGGGVYRVVPDRIETGTFLVAAAVSRGQIICRNTRPDTLDAVLAKLREAGAEIEIGEDWISLDMHGKRPKAVTVRTSPHPGFPTDMQAQFSLLNLVAEGTGVITETIFENRFMHVPELIRMGAQAEIESNTVICHGVDKLSGAQVMATDLRASASLVLAGCIAEGVTIVDRIYHIDRGYDRIEDKLRALGANIERVKEHE.

22–23 (KN) contributes to the phosphoenolpyruvate binding site. Arg91 is a binding site for UDP-N-acetyl-alpha-D-glucosamine. Cys115 acts as the Proton donor in catalysis. 2-(S-cysteinyl)pyruvic acid O-phosphothioketal is present on Cys115. UDP-N-acetyl-alpha-D-glucosamine is bound by residues 120 to 124 (RPVDL), 160 to 163 (KVSV), Asp305, and Ile327.

It belongs to the EPSP synthase family. MurA subfamily.

The protein resides in the cytoplasm. It carries out the reaction phosphoenolpyruvate + UDP-N-acetyl-alpha-D-glucosamine = UDP-N-acetyl-3-O-(1-carboxyvinyl)-alpha-D-glucosamine + phosphate. It participates in cell wall biogenesis; peptidoglycan biosynthesis. Functionally, cell wall formation. Adds enolpyruvyl to UDP-N-acetylglucosamine. The sequence is that of UDP-N-acetylglucosamine 1-carboxyvinyltransferase from Pectobacterium carotovorum subsp. carotovorum (strain PC1).